A 469-amino-acid chain; its full sequence is Sorting and assembly machinery component 50 homolog (469 aa).

The interval 1–20 (MGTVHARSLEPLPSSGPDFG) is disordered. A POTRA domain is found at 45–125 (VVVQHVHFDG…LDVTFEVTEL (81 aa)). K255 carries the N6-methyllysine modification.

It belongs to the SAM50/omp85 family. In terms of assembly, associates with the mitochondrial contact site and cristae organizing system (MICOS) complex, composed of at least MICOS10/MIC10, CHCHD3/MIC19, CHCHD6/MIC25, APOOL/MIC27, IMMT/MIC60, APOO/MIC23/MIC26 and QIL1/MIC13. This complex was also known under the names MINOS or MitOS complex. The MICOS complex associates with mitochondrial outer membrane proteins SAMM50, MTX1 and MTX2 (together described as components of the mitochondrial outer membrane sorting assembly machinery (SAM) complex) and DNAJC11, mitochondrial inner membrane protein TMEM11 and with HSPA9. The MICOS and SAM complexes together with DNAJC11 are part of a large protein complex spanning both membranes termed the mitochondrial intermembrane space bridging (MIB) complex. Interacts with CHCHD3/MIC19. Interacts with ARMC1. As to quaternary structure, (Microbial infection) Interacts with parasite T.gondii RH strain MAF1b1; the interaction is probably indirect and results in the disruption of the MIB complex and the formation of SPOTs (structures positive for outer mitochondrial membrane (OMM)), a cellular response to OMM stress, which leads to the constitutive shedding of OMM vesicles.

The protein resides in the mitochondrion outer membrane. It is found in the cytoplasm. It localises to the mitochondrion. Plays a crucial role in the maintenance of the structure of mitochondrial cristae and the proper assembly of the mitochondrial respiratory chain complexes. Required for the assembly of TOMM40 into the TOM complex. This is Sorting and assembly machinery component 50 homolog (SAMM50) from Homo sapiens (Human).